Consider the following 323-residue polypeptide: MVFAKISQLAHYAPSQIIKNEDLSLIMDTSDDWISSRTGIKQRHISKNETTADLANKVAEQLIEKSGYSASQIDFIIVATMTPDSMMPSTAARVQAHIGASNAFAFDLSAACSGFVFALSTAEKLISSGSYQKGLVIGAETVSKVLDWTDRGTAVLFGDGAGGVLLEASKEKHFLAESLNTDGSRQGLQSSQVGLNSPFSDEVLDDKFLKMDGRAIFDFAIKEVSKSINHLIETSYLEKEDIDYLFLHQANRRILDKMSRKIDIARDKFPENMMDYGNTSAASIPILLSESYENGLLKLDGNQTILLSGFGGGLTWGSLIVKI.

Active-site residues include C112 and H248. The tract at residues 249-253 (QANRR) is ACP-binding. N278 is a catalytic residue.

The protein belongs to the thiolase-like superfamily. FabH family. In terms of assembly, homodimer.

It is found in the cytoplasm. It carries out the reaction malonyl-[ACP] + acetyl-CoA + H(+) = 3-oxobutanoyl-[ACP] + CO2 + CoA. It participates in lipid metabolism; fatty acid biosynthesis. Catalyzes the condensation reaction of fatty acid synthesis by the addition to an acyl acceptor of two carbons from malonyl-ACP. Catalyzes the first condensation reaction which initiates fatty acid synthesis and may therefore play a role in governing the total rate of fatty acid production. Possesses both acetoacetyl-ACP synthase and acetyl transacylase activities. Its substrate specificity determines the biosynthesis of branched-chain and/or straight-chain of fatty acids. The polypeptide is Beta-ketoacyl-[acyl-carrier-protein] synthase III (Streptococcus agalactiae serotype Ia (strain ATCC 27591 / A909 / CDC SS700)).